Reading from the N-terminus, the 200-residue chain is 3-isopropylmalate dehydratase small subunit (200 aa).

It belongs to the LeuD family. LeuD type 1 subfamily. In terms of assembly, heterodimer of LeuC and LeuD.

The enzyme catalyses (2R,3S)-3-isopropylmalate = (2S)-2-isopropylmalate. Its pathway is amino-acid biosynthesis; L-leucine biosynthesis; L-leucine from 3-methyl-2-oxobutanoate: step 2/4. In terms of biological role, catalyzes the isomerization between 2-isopropylmalate and 3-isopropylmalate, via the formation of 2-isopropylmaleate. The protein is 3-isopropylmalate dehydratase small subunit of Erythrobacter litoralis (strain HTCC2594).